The following is a 526-amino-acid chain: Protein spinster homolog 1 (526 aa).

Positions 1-44 (MTSRRSHGDVTPFLTQADNTEEEGVRDPESQSSDEEEEEGKDHG) are disordered. The next 12 helical transmembrane spans lie at 59 to 79 (VIIV…RFTV), 98 to 118 (GLVQ…FGYL), 126 to 146 (LIMC…SFVS), 159 to 179 (LVGV…ADLF), 187 to 207 (MLSF…IVGS), 218 to 238 (WALR…IFVA), 272 to 292 (FILS…LALW), 321 to 341 (MIFG…GVEI), 355 to 375 (LVCA…LAFA), 384 to 404 (VFIF…ADIL), 419 to 439 (LQIV…IGVI), and 463 to 483 (MICA…ALFI).

The protein belongs to the major facilitator superfamily. Spinster (TC 2.A.1.49) family.

It is found in the lysosome membrane. It catalyses the reaction a 1-acyl-sn-glycero-3-phosphocholine(out) + H(+)(out) = a 1-acyl-sn-glycero-3-phosphocholine(in) + H(+)(in). It carries out the reaction a 1-acyl-sn-glycero-3-phosphoethanolamine(out) + H(+)(out) = a 1-acyl-sn-glycero-3-phosphoethanolamine(in) + H(+)(in). The enzyme catalyses a 1-O-(1Z-alkenyl)-sn-glycero-3-phosphocholine(out) + H(+)(out) = a 1-O-(1Z-alkenyl)-sn-glycero-3-phosphocholine(in) + H(+)(in). The catalysed reaction is a 1-O-(1Z-alkenyl)-sn-glycero-3-phosphoethanolamine(out) + H(+)(out) = a 1-O-(1Z-alkenyl)-sn-glycero-3-phosphoethanolamine(in) + H(+)(in). Functionally, mediates the rate-limiting, proton-dependent, lysosomal efflux of lysophospholipids. Selective for zwitterionic headgroups such as lysophosphatidylcholine (LPC) and lysophosphatidylethanolamine (LPE). Essential player in lysosomal homeostasis. This is Protein spinster homolog 1 (spns1) from Xenopus laevis (African clawed frog).